Reading from the N-terminus, the 615-residue chain is Dolichyl-diphosphooligosaccharide--protein glycosyltransferase subunit 1A (615 aa).

Residues 1-28 (MATPPPLRRVAALLLLLVAAASTPTARA) form the signal peptide. Residues 29–437 (DLVVTRADRK…RFNNISLLRE (409 aa)) lie on the Lumenal side of the membrane. Residue lysine 187 is modified to N6-acetyllysine. N-linked (GlcNAc...) asparagine glycans are attached at residues asparagine 300, asparagine 353, and asparagine 431. The helical transmembrane segment at 438–455 (PMMLITGFFLLFMACIVY) threads the bilayer. The Cytoplasmic segment spans residues 456–615 (MRTDMSISKN…ESLLEYISEI (160 aa)).

This sequence belongs to the OST1 family. As to quaternary structure, component of the oligosaccharyltransferase (OST) complex.

It localises to the endoplasmic reticulum membrane. Its pathway is protein modification; protein glycosylation. Functionally, subunit of the oligosaccharyl transferase (OST) complex that catalyzes the initial transfer of a defined glycan (Glc(3)Man(9)GlcNAc(2) in eukaryotes) from the lipid carrier dolichol-pyrophosphate to an asparagine residue within an Asn-X-Ser/Thr consensus motif in nascent polypeptide chains, the first step in protein N-glycosylation. N-glycosylation occurs cotranslationally and the complex associates with the Sec61 complex at the channel-forming translocon complex that mediates protein translocation across the endoplasmic reticulum (ER). All subunits are required for a maximal enzyme activity. This chain is Dolichyl-diphosphooligosaccharide--protein glycosyltransferase subunit 1A (OST1A), found in Oryza sativa subsp. japonica (Rice).